The chain runs to 274 residues: 2-dehydro-3-deoxyphosphooctonate aldolase (274 aa).

Belongs to the KdsA family.

The protein localises to the cytoplasm. It carries out the reaction D-arabinose 5-phosphate + phosphoenolpyruvate + H2O = 3-deoxy-alpha-D-manno-2-octulosonate-8-phosphate + phosphate. Its pathway is carbohydrate biosynthesis; 3-deoxy-D-manno-octulosonate biosynthesis; 3-deoxy-D-manno-octulosonate from D-ribulose 5-phosphate: step 2/3. The protein operates within bacterial outer membrane biogenesis; lipopolysaccharide biosynthesis. The protein is 2-dehydro-3-deoxyphosphooctonate aldolase of Legionella pneumophila (strain Corby).